The chain runs to 389 residues: Succinyl-diaminopimelate desuccinylase (389 aa).

Histidine 72 is a Zn(2+) binding site. Residue aspartate 74 is part of the active site. Aspartate 105 is a binding site for Zn(2+). The active-site Proton acceptor is glutamate 144. Residues glutamate 145, glutamate 173, and histidine 362 each contribute to the Zn(2+) site.

Belongs to the peptidase M20A family. DapE subfamily. In terms of assembly, homodimer. It depends on Zn(2+) as a cofactor. Co(2+) serves as cofactor.

It catalyses the reaction N-succinyl-(2S,6S)-2,6-diaminopimelate + H2O = (2S,6S)-2,6-diaminopimelate + succinate. It participates in amino-acid biosynthesis; L-lysine biosynthesis via DAP pathway; LL-2,6-diaminopimelate from (S)-tetrahydrodipicolinate (succinylase route): step 3/3. Its function is as follows. Catalyzes the hydrolysis of N-succinyl-L,L-diaminopimelic acid (SDAP), forming succinate and LL-2,6-diaminopimelate (DAP), an intermediate involved in the bacterial biosynthesis of lysine and meso-diaminopimelic acid, an essential component of bacterial cell walls. This Nitrobacter hamburgensis (strain DSM 10229 / NCIMB 13809 / X14) protein is Succinyl-diaminopimelate desuccinylase.